The chain runs to 110 residues: U1-lycotoxin-Ls1mm (110 aa).

Positions 1–20 (MKFVLLFGVLLVTLFSYSSA) are cleaved as a signal peptide. The propeptide occupies 21–44 (EMLDDFDQADEDELLSLIEKEEAR). 4 disulfide bridges follow: Cys47–Cys62, Cys54–Cys71, Cys61–Cys89, and Cys73–Cys87.

The protein belongs to the neurotoxin 19 (CSTX) family. 03 subfamily. In terms of tissue distribution, expressed by the venom gland.

The protein resides in the secreted. This chain is U1-lycotoxin-Ls1mm, found in Lycosa singoriensis (Wolf spider).